A 179-amino-acid chain; its full sequence is Large ribosomal subunit protein uL5 (179 aa).

Belongs to the universal ribosomal protein uL5 family. Part of the 50S ribosomal subunit; part of the 5S rRNA/L5/L18/L25 subcomplex. Contacts the 5S rRNA and the P site tRNA. Forms a bridge to the 30S subunit in the 70S ribosome.

Functionally, this is one of the proteins that bind and probably mediate the attachment of the 5S RNA into the large ribosomal subunit, where it forms part of the central protuberance. In the 70S ribosome it contacts protein S13 of the 30S subunit (bridge B1b), connecting the 2 subunits; this bridge is implicated in subunit movement. Contacts the P site tRNA; the 5S rRNA and some of its associated proteins might help stabilize positioning of ribosome-bound tRNAs. The polypeptide is Large ribosomal subunit protein uL5 (Pseudoalteromonas translucida (strain TAC 125)).